A 126-amino-acid chain; its full sequence is Histone H2B type 2-E (126 aa).

The span at methionine 1 to lysine 12 shows a compositional bias: low complexity. The tract at residues methionine 1–lysine 35 is disordered. The residue at position 2 (proline 2) is an N-acetylproline. Glutamate 3 is modified (ADP-ribosyl glutamic acid). Lysine 6 carries the N6-(2-hydroxyisobutyryl)lysine; alternate modification. An N6-(beta-hydroxybutyryl)lysine; alternate modification is found at lysine 6. N6-acetyllysine; alternate is present on lysine 6. At lysine 6 the chain carries N6-butyryllysine; alternate. Lysine 6 is subject to N6-crotonyllysine; alternate. N6-lactoyllysine; alternate is present on lysine 6. Lysine 6 is covalently cross-linked (Glycyl lysine isopeptide (Lys-Gly) (interchain with G-Cter in SUMO2); alternate). Serine 7 is subject to ADP-ribosylserine. Lysine 12 bears the N6-(beta-hydroxybutyryl)lysine; alternate mark. 2 positions are modified to N6-acetyllysine; alternate: lysine 12 and lysine 13. 2 positions are modified to N6-crotonyllysine; alternate: lysine 12 and lysine 13. Lysine 12 bears the N6-lactoyllysine; alternate mark. Position 13 is an N6-(2-hydroxyisobutyryl)lysine; alternate (lysine 13). Serine 15 carries the post-translational modification Phosphoserine; by STK4/MST1. Lysine 16, lysine 17, lysine 21, and lysine 24 each carry N6-acetyllysine; alternate. 4 positions are modified to N6-crotonyllysine; alternate: lysine 16, lysine 17, lysine 21, and lysine 24. N6-lactoyllysine; alternate is present on residues lysine 16, lysine 17, lysine 21, and lysine 24. N6-(beta-hydroxybutyryl)lysine; alternate occurs at positions 17 and 21. Lysine 17 carries the N6-glutaryllysine; alternate modification. An N6-(2-hydroxyisobutyryl)lysine; alternate mark is found at lysine 21 and lysine 24. The residue at position 21 (lysine 21) is an N6-butyryllysine; alternate. Lysine 21 participates in a covalent cross-link: Glycyl lysine isopeptide (Lys-Gly) (interchain with G-Cter in SUMO2); alternate. Position 25 is an N6-(2-hydroxyisobutyryl)lysine (lysine 25). The residue at position 35 (lysine 35) is an N6-(2-hydroxyisobutyryl)lysine; alternate. Lysine 35 is subject to N6-(beta-hydroxybutyryl)lysine; alternate. Lysine 35 carries the post-translational modification N6-crotonyllysine; alternate. Position 35 is an N6-glutaryllysine; alternate (lysine 35). Residue lysine 35 is modified to N6-succinyllysine; alternate. A Glycyl lysine isopeptide (Lys-Gly) (interchain with G-Cter in ubiquitin); alternate cross-link involves residue lysine 35. Glutamate 36 carries the post-translational modification PolyADP-ribosyl glutamic acid. Serine 37 carries the post-translational modification Phosphoserine; by AMPK. N6-(2-hydroxyisobutyryl)lysine; alternate occurs at positions 44, 47, and 58. The residue at position 44 (lysine 44) is an N6-lactoyllysine; alternate. An N6-glutaryllysine; alternate mark is found at lysine 44 and lysine 47. The residue at position 47 (lysine 47) is an N6-methyllysine; alternate. Lysine 58 is modified (N6,N6-dimethyllysine; alternate). Position 80 is a dimethylated arginine (arginine 80). Lysine 86 bears the N6-(2-hydroxyisobutyryl)lysine; alternate mark. Position 86 is an N6-(beta-hydroxybutyryl)lysine; alternate (lysine 86). Lysine 86 is subject to N6-acetyllysine; alternate. N6-lactoyllysine; alternate is present on lysine 86. Residue lysine 86 is modified to N6,N6,N6-trimethyllysine; alternate. Residues arginine 87 and arginine 93 each carry the omega-N-methylarginine modification. Lysine 109 carries the N6-(2-hydroxyisobutyryl)lysine; alternate modification. Lysine 109 carries the N6-lactoyllysine; alternate modification. Lysine 109 is subject to N6-glutaryllysine; alternate. Residue lysine 109 is modified to N6-methyllysine; alternate. Serine 113 is a glycosylation site (O-linked (GlcNAc) serine). Residue threonine 116 is modified to Phosphothreonine. Lysine 117 and lysine 121 each carry N6-(2-hydroxyisobutyryl)lysine; alternate. N6-(beta-hydroxybutyryl)lysine; alternate occurs at positions 117 and 121. N6-lactoyllysine; alternate occurs at positions 117 and 121. 2 positions are modified to N6-glutaryllysine; alternate: lysine 117 and lysine 121. 2 positions are modified to N6-succinyllysine; alternate: lysine 117 and lysine 121. Lysine 117 carries the post-translational modification N6-malonyllysine; alternate. At lysine 117 the chain carries N6-methylated lysine; alternate. Residue lysine 121 forms a Glycyl lysine isopeptide (Lys-Gly) (interchain with G-Cter in ubiquitin); alternate linkage.

It belongs to the histone H2B family. In terms of assembly, the nucleosome is a histone octamer containing two molecules each of H2A, H2B, H3 and H4 assembled in one H3-H4 heterotetramer and two H2A-H2B heterodimers. The octamer wraps approximately 147 bp of DNA. In terms of processing, monoubiquitination at Lys-35 (H2BK34Ub) by the MSL1/MSL2 dimer is required for histone H3 'Lys-4' (H3K4me) and 'Lys-79' (H3K79me) methylation and transcription activation at specific gene loci, such as HOXA9 and MEIS1 loci. Similarly, monoubiquitination at Lys-121 (H2BK120Ub) by the RNF20/40 complex gives a specific tag for epigenetic transcriptional activation and is also prerequisite for histone H3 'Lys-4' and 'Lys-79' methylation. It also functions cooperatively with the FACT dimer to stimulate elongation by RNA polymerase II. H2BK120Ub also acts as a regulator of mRNA splicing: deubiquitination by USP49 is required for efficient cotranscriptional splicing of a large set of exons. Phosphorylation at Ser-37 (H2BS36ph) by AMPK in response to stress promotes transcription. Phosphorylated on Ser-15 (H2BS14ph) by STK4/MST1 during apoptosis; which facilitates apoptotic chromatin condensation. Also phosphorylated on Ser-15 in response to DNA double strand breaks (DSBs), and in correlation with somatic hypermutation and immunoglobulin class-switch recombination. Post-translationally, glcNAcylation at Ser-113 promotes monoubiquitination of Lys-121. It fluctuates in response to extracellular glucose, and associates with transcribed genes. In terms of processing, ADP-ribosylated by PARP1 or PARP2 on Ser-7 (H2BS6ADPr) in response to DNA damage. H2BS6ADPr promotes recruitment of CHD1L. Mono-ADP-ribosylated on Glu-3 (H2BE2ADPr) by PARP3 in response to single-strand breaks. Poly ADP-ribosylation on Glu-36 (H2BE35ADPr) by PARP1 regulates adipogenesis: it inhibits phosphorylation at Ser-37 (H2BS36ph), thereby blocking expression of pro-adipogenetic genes. Crotonylation (Kcr) is specifically present in male germ cells and marks testis-specific genes in post-meiotic cells, including X-linked genes that escape sex chromosome inactivation in haploid cells. Crotonylation marks active promoters and enhancers and confers resistance to transcriptional repressors. It is also associated with post-meiotically activated genes on autosomes. Post-translationally, lactylated in macrophages by EP300/P300 by using lactoyl-CoA directly derived from endogenous or exogenous lactate, leading to stimulates gene transcription.

The protein resides in the nucleus. It localises to the chromosome. Its function is as follows. Core component of nucleosome. Nucleosomes wrap and compact DNA into chromatin, limiting DNA accessibility to the cellular machineries which require DNA as a template. Histones thereby play a central role in transcription regulation, DNA repair, DNA replication and chromosomal stability. DNA accessibility is regulated via a complex set of post-translational modifications of histones, also called histone code, and nucleosome remodeling. Has broad antibacterial activity. May contribute to the formation of the functional antimicrobial barrier of the colonic epithelium, and to the bactericidal activity of amniotic fluid. This is Histone H2B type 2-E from Homo sapiens (Human).